The primary structure comprises 88 residues: MKEGIHPDYREVLFIDVSNDFKFVTRSTIQTRETAEFEGKTYPLAKIEVSSESHPFYTGQQKIMDTAGRVEKFRNKFGSRATGKAVAK.

The protein belongs to the bacterial ribosomal protein bL31 family. Type B subfamily. Part of the 50S ribosomal subunit.

In Paraburkholderia phytofirmans (strain DSM 17436 / LMG 22146 / PsJN) (Burkholderia phytofirmans), this protein is Large ribosomal subunit protein bL31B.